Reading from the N-terminus, the 137-residue chain is MLKRYLVLSVVTAAFSLPSLVYAAQQNILSVHILNQQTGKPAADVTVTLEKKADNGWLQLNTAKTDKDGRIKALWPEQTATTGDYRVVFKTGDYFKKQNLESFFPEIPVEFHINKVNEHYHVPLLLSQYGYSTYRGS.

The first 23 residues, 1–23 (MLKRYLVLSVVTAAFSLPSLVYA), serve as a signal peptide directing secretion. Substrate is bound by residues histidine 32, arginine 70, and tyrosine 134.

The protein belongs to the transthyretin family. 5-hydroxyisourate hydrolase subfamily. Homotetramer.

Its subcellular location is the periplasm. It carries out the reaction 5-hydroxyisourate + H2O = 5-hydroxy-2-oxo-4-ureido-2,5-dihydro-1H-imidazole-5-carboxylate + H(+). Catalyzes the hydrolysis of 5-hydroxyisourate (HIU) to 2-oxo-4-hydroxy-4-carboxy-5-ureidoimidazoline (OHCU). The sequence is that of 5-hydroxyisourate hydrolase (hiuH) from Escherichia coli O157:H7.